The following is a 307-amino-acid chain: MTVEGETPKRCPECNSEHLIRDYEHGELICADCGAVIEDAYIDQGPEWRAFDSDQDERRARTGSPMTYLSHDKGLATEISWSNKDYYGKRIPHKNRAQIYRVRKWHQRIRVSNAAERNLSLALQLLNDIGAKLGIPKDIKETAALIYRKAVEKNLIRGRSIESIVCASIYAACRKVNIPRTLDEISKASEVNKKKIGKAYRHLAKELDLNLKPTTPFSYISQFCNKLDLDKQAIVISEDIVRQAMSMGISSGKGPTGIAAAAIYIASVKVGKPRTQKEIARISGVTEVTIRNRYKEISKALNISISE.

A TFIIB-type zinc finger spans residues T7–E38. 4 residues coordinate Zn(2+): C11, C14, C30, and C33. 2 tandem repeats follow at residues Q124–L207 and S218–K299.

Belongs to the TFIIB family.

Its function is as follows. Stabilizes TBP binding to an archaeal box-A promoter. Also responsible for recruiting RNA polymerase II to the pre-initiation complex (DNA-TBP-TFIIB). The protein is Transcription initiation factor IIB 2 of Thermoplasma acidophilum (strain ATCC 25905 / DSM 1728 / JCM 9062 / NBRC 15155 / AMRC-C165).